The chain runs to 160 residues: Phosphopantetheine adenylyltransferase (160 aa).

T10 is a substrate binding site. Residues 10-11 (TF) and H18 each bind ATP. K42, L74, and R88 together coordinate substrate. Residues 89 to 91 (GLR), E99, and 124 to 130 (NSFISST) contribute to the ATP site.

It belongs to the bacterial CoaD family. Homohexamer. The cofactor is Mg(2+).

It localises to the cytoplasm. The catalysed reaction is (R)-4'-phosphopantetheine + ATP + H(+) = 3'-dephospho-CoA + diphosphate. It functions in the pathway cofactor biosynthesis; coenzyme A biosynthesis; CoA from (R)-pantothenate: step 4/5. Reversibly transfers an adenylyl group from ATP to 4'-phosphopantetheine, yielding dephospho-CoA (dPCoA) and pyrophosphate. This chain is Phosphopantetheine adenylyltransferase, found in Shewanella piezotolerans (strain WP3 / JCM 13877).